The chain runs to 367 residues: 4-hydroxy-3-methylbut-2-en-1-yl diphosphate synthase (flavodoxin) (367 aa).

Positions 270, 273, 305, and 312 each coordinate [4Fe-4S] cluster.

The protein belongs to the IspG family. It depends on [4Fe-4S] cluster as a cofactor.

It carries out the reaction (2E)-4-hydroxy-3-methylbut-2-enyl diphosphate + oxidized [flavodoxin] + H2O + 2 H(+) = 2-C-methyl-D-erythritol 2,4-cyclic diphosphate + reduced [flavodoxin]. The protein operates within isoprenoid biosynthesis; isopentenyl diphosphate biosynthesis via DXP pathway; isopentenyl diphosphate from 1-deoxy-D-xylulose 5-phosphate: step 5/6. Converts 2C-methyl-D-erythritol 2,4-cyclodiphosphate (ME-2,4cPP) into 1-hydroxy-2-methyl-2-(E)-butenyl 4-diphosphate. The protein is 4-hydroxy-3-methylbut-2-en-1-yl diphosphate synthase (flavodoxin) of Buchnera aphidicola subsp. Schizaphis graminum (strain Sg).